Consider the following 212-residue polypeptide: Large ribosomal subunit protein uL3 (212 aa).

A disordered region spans residues 135–156 (MTHGNSRSHRVPGSIGQNQSPG). Gln153 bears the N5-methylglutamine mark.

The protein belongs to the universal ribosomal protein uL3 family. Part of the 50S ribosomal subunit. Forms a cluster with proteins L14 and L19. Methylated by PrmB.

Functionally, one of the primary rRNA binding proteins, it binds directly near the 3'-end of the 23S rRNA, where it nucleates assembly of the 50S subunit. This chain is Large ribosomal subunit protein uL3, found in Tolumonas auensis (strain DSM 9187 / NBRC 110442 / TA 4).